Consider the following 166-residue polypeptide: Ribosome-binding factor A (166 aa).

Positions 119 to 166 (VQAQAKSGVYAGDEDPYVKPRVIGEDEDEDDEDGDDIDRSAPGYEPAH) are disordered. A compositionally biased stretch (acidic residues) spans 143 to 154 (EDEDEDDEDGDD).

It belongs to the RbfA family. Monomer. Binds 30S ribosomal subunits, but not 50S ribosomal subunits or 70S ribosomes.

The protein localises to the cytoplasm. In terms of biological role, one of several proteins that assist in the late maturation steps of the functional core of the 30S ribosomal subunit. Associates with free 30S ribosomal subunits (but not with 30S subunits that are part of 70S ribosomes or polysomes). Required for efficient processing of 16S rRNA. May interact with the 5'-terminal helix region of 16S rRNA. This Clavibacter michiganensis subsp. michiganensis (strain NCPPB 382) protein is Ribosome-binding factor A.